Here is a 793-residue protein sequence, read N- to C-terminus: Protocadherin beta-7 (793 aa).

The N-terminal stretch at methionine 1–alanine 26 is a signal peptide. Residues glycine 27–leucine 688 are Extracellular-facing. Cadherin domains follow at residues valine 35–phenylalanine 133, isoleucine 138–phenylalanine 242, tyrosine 247–leucine 347, leucine 352–phenylalanine 451, and tyrosine 456–valine 561. Asparagine 169 carries an N-linked (GlcNAc...) asparagine glycan. Asparagine 418 and asparagine 436 each carry an N-linked (GlcNAc...) asparagine glycan. The N-linked (GlcNAc...) asparagine glycan is linked to asparagine 567. The region spanning serine 568–leucine 671 is the Cadherin 6 domain. Residues valine 689 to valine 709 form a helical membrane-spanning segment. Topologically, residues arginine 710 to phenylalanine 793 are cytoplasmic.

It localises to the cell membrane. In terms of biological role, potential calcium-dependent cell-adhesion protein. May be involved in the establishment and maintenance of specific neuronal connections in the brain. This Pan troglodytes (Chimpanzee) protein is Protocadherin beta-7 (PCDHB7).